Here is a 484-residue protein sequence, read N- to C-terminus: MRRMMPAAPPQGASPPPSYESVVGSSLTEPLYVPPRYLGPTEGRNSIRYSQLPPLYDTTKIYLIDNKSADIASLNYQNNHSDFLTSVVQNSDFTPMEASTQTINLDERSRWGGEFKSILTTNIPNVTQYMFSNSFRVRLMSARDKETNAPTYEWFTLTLPEGNFSDIAVIDLMNNAIVENYLAVGRQQGVKEEDIGVKIDTRNFRLGYDPETKLVMPGSYTNMAFHPDVVLAPGCAIDFTFSRLNNLLGIRKRYPYQEGFMLTYEDLAGGNIPALLDLTTYDQENSSTIKPLKQDSKGRSYHVGEDPEAGDTFTYYRSWYLAYNYGDPATGTASQTLLVSPDVTCGVEQVYWSLPDLMQDPVTFRPSQTPSNYPVVATELLPLRSRAFYNTQAVYSQLLQQATNNTLVFNRFPENQILLRPPESTITSISENVPSLTDHGTLPLRNSIPGVQRVTVTDARRRVCPYVYKSLGVVTPRVLSSRTF.

Positions 1 to 24 are disordered; sequence MRRMMPAAPPQGASPPPSYESVVG. A compositionally biased stretch (pro residues) spans 7-18; it reads AAPPQGASPPPS.

Belongs to the adenoviridae penton family. In terms of assembly, interacts with the fiber protein (via N-terminal tail region). Interacts with the capsid vertex protein; this interaction binds the penton base to neighboring peripentonal hexons.

The protein resides in the virion. Its subcellular location is the host nucleus. Major capsid protein that self-associates to form penton base pentamers, each in the shape of a pentagon, situated at the 12 vertices of the pseudo T=25 capsid. Involved in virus secondary attachment to host cell after initial attachment by the fiber protein, and in endocytosis of virions. As the virus enters the host cell, penton proteins are shed concomitant with virion acidification in the endosome. In Sus scrofa (Pig), this protein is Penton protein.